The sequence spans 171 residues: UPF0312 protein MW2606 (171 aa).

This sequence belongs to the UPF0312 family.

This is UPF0312 protein MW2606 from Staphylococcus aureus (strain MW2).